Consider the following 886-residue polypeptide: Envelope glycoprotein GP350 (886 aa).

The Virion surface portion of the chain corresponds to 1–839; sequence MEAALLVCQY…TSQPRFSNLS (839 aa). Residues Asn-47, Asn-87, Asn-114, Asn-166, Asn-169, Asn-195, Asn-229, Asn-277, Asn-318, Asn-328, Asn-345, Asn-356, Asn-378, Asn-386, Asn-411, Asn-435, Asn-443, Asn-457, Asn-497, Asn-519, Asn-533, Asn-554, Asn-568, Asn-589, Asn-603, Asn-606, Asn-624, and Asn-635 are each glycosylated (N-linked (GlcNAc...) asparagine; by host). Residues 423–810 form a disordered region; the sequence is KAPESTTTSP…PSTSSKLRPR (388 aa). A compositionally biased stretch (low complexity) spans 428-437; the sequence is TTTSPTLNTT. Polar residues predominate over residues 442–488; that stretch reads PNTTTGLPSSTHVPTNLTAPASTGPTVSTADVTSPTPAGTTSGASPV. The segment covering 507–595 has biased composition (low complexity); sequence TSPTSAVTTP…PTPNATSPTV (89 aa). Residues 596–637 are compositionally biased toward polar residues; sequence GETSPQANTTNHTLGGTSSTPVVTSPPKNATSAVTTGQHNIT. The span at 638–660 shows a compositional bias: low complexity; that stretch reads SSSTSSMSLRPSSISETLSPSTS. 2 N-linked (GlcNAc...) asparagine; by host glycosylation sites follow: Asn-662 and Asn-680. Over residues 684–699 the composition is skewed to low complexity; sequence VTPASTSTHHVSTSSP. Over residues 704-720 the composition is skewed to polar residues; sequence GTTSQASGPGNSSTSTK. N-linked (GlcNAc...) asparagine; by host glycosylation is found at Asn-714, Asn-725, Asn-734, and Asn-759. The segment covering 733–760 has biased composition (polar residues); that stretch reads KNATSPQAPSGQKTAVPTVTSTGGKANS. The span at 761–771 shows a compositional bias: low complexity; that stretch reads TTGGKHTTGHG. Residues 773–806 are compositionally biased toward polar residues; sequence RTSTEPTTDYGGDSTTPRTRYNATTYLPPSTSSK. Asn-794 and Asn-837 each carry an N-linked (GlcNAc...) asparagine; by host glycan. A helical membrane pass occupies residues 840–860; that stretch reads MLVLQWASLAVLTLLLLLVMA. Residues 861-886 lie on the Intravirion side of the membrane; it reads DCAFRRNLSTSHTYTTPPYDDAETYV.

The protein belongs to the Epstein-Barr GP350 family. As to quaternary structure, interacts with host CR2. Post-translationally, extensively glycosylated.

The protein localises to the virion membrane. The protein resides in the host membrane. Its function is as follows. Initiates virion attachment to host B-lymphocyte cell, leading to virus entry. Acts by binding to host CR2 at the surface of B-lymphocytes, facilitating the binding of viral glycoprotein gp42 to HLA class II molecules. Attachment triggers virion-host membrane fusion and invasion of the host cell. The protein is Envelope glycoprotein GP350 of Homo sapiens (Human).